The chain runs to 658 residues: MTQLAIGEATPHGATYDGHGVNFTLFSAHAERVELCVFDSRGNERRYDLPGRRGDVWHGYLAGARPGLRYGYRVHGPWQPVQGHRFNPAKLLLDPYARRVEGELKDHPLLHGGHDEPDYRDNAAVAPKSVVISDHYDWEDDAAPRTPWGKTVIYEAHVKGLTYLHPELPQEIRGTYKALGHPVMVAYFKQLGITALELLPVAQFASEPRLQRMGLTNYWGYNPMAMFALHPAWASSPEMALDEFRDAVKALHRAGIEVILDIVLNHSAELDLDGPTFSLRGIDNRSYYWIRDDGDYHNWTGCGNTLNLSHPGVVEYACECLRYWVETCHVDGFRFDLASVMGRTPTFRQDAPLFAAIKACPVLSTVKLIAEPWDIGEGGYQVGNFPPPFAEWNDHFRDAARRFWLPRNLTTGEFACRFAASSDVFKRNGRAPGASVNLLTAHDGFTLRDCVCFNQKHNEANGEENRDGTNSNYSDNNGKEGLGGPLDLMERRRDSIHALLATLLLSQGTPMLLAGDEHGHSQHGNNNAYCQDNALTWLDWQQANRGLTTFTAALIRLRQQIPALTGNSWWEEGDGNVRWLNKNAQPLSADEWQNGPKLMQILLSDRFLIAINATLEVTDIVLPEGEWRAVPPFAGEDNPVITAVWQGPAHGLCVFQRG.

Catalysis depends on Asp-336, which acts as the Nucleophile. The active-site Proton donor is the Glu-371. Residues 459 to 486 (EANGEENRDGTNSNYSDNNGKEGLGGPL) form a disordered region.

Belongs to the glycosyl hydrolase 13 family.

It carries out the reaction Hydrolysis of (1-&gt;6)-alpha-D-glucosidic linkages to branches with degrees of polymerization of three or four glucose residues in limit dextrin.. Its pathway is glycan degradation; glycogen degradation. In terms of biological role, removes maltotriose and maltotetraose chains that are attached by 1,6-alpha-linkage to the limit dextrin main chain, generating a debranched limit dextrin. This chain is Glycogen debranching enzyme, found in Salmonella gallinarum (strain 287/91 / NCTC 13346).